The primary structure comprises 834 residues: Protein Jade-1 (834 aa).

The segment at 1-46 (MKRGRLPSSSEDSDDNGSLSTTWSQHSRSQHGRSSTCSRPEDRKPS) is disordered. A compositionally biased stretch (low complexity) spans 24–35 (SQHSRSQHGRSS). The interaction with KAT7/HBO1 and histones stretch occupies residues 61–81 (DSYQLNPDDYYVLADPWRQEW). The interval 81–189 (WEKGVQVPVS…EQRCYDNMNH (109 aa)) is interaction with histones. Ser-90 is subject to Phosphoserine. The residue at position 93 (Thr-93) is a Phosphothreonine. A Glycyl lysine isopeptide (Lys-Gly) (interchain with G-Cter in SUMO2) cross-link involves residue Lys-115. The segment at 204–254 (DVVCDVCQSPDGEDGNEMVFCDKCNICVHQACYGILKVPEGSWLCRTCALG) adopts a PHD-type 1 zinc-finger fold. The segment at 256–290 (QPKCLLCPKKGGAMKPTRSGTKWVHVSCALWIPEV) adopts a C2HC pre-PHD-type zinc-finger fold. The segment at 314–370 (LVCSLCNEKFGASIQCSVKNCRTAFHVTCAFDRGLEMKTILAENDEVKFKSYCPKHS) adopts a PHD-type 2 zinc-finger fold. A disordered region spans residues 367-409 (PKHSSHRKPEEGLGEGAAQENGAPESSPQSPLEPYGSLEPNRE). Lys-573 participates in a covalent cross-link: Glycyl lysine isopeptide (Lys-Gly) (interchain with G-Cter in SUMO2). Disordered regions lie at residues 589–621 (HPLK…CGRR) and 676–716 (DKSF…GTRK). Ser-603 is subject to Phosphoserine. Lys-609 carries the N6-acetyllysine modification. Residues Ser-704 and Ser-735 each carry the phosphoserine modification. The tract at residues 738 to 819 (KSWGGFRIPK…EKKCIHASST (82 aa)) is disordered. 2 stretches are compositionally biased toward basic and acidic residues: residues 747 to 768 (KKGE…HSDC) and 777 to 790 (PAKE…RADS).

It belongs to the JADE family. In terms of assembly, component of the HBO1 complex composed at least of ING4 or ING5, KAT7/HBO1, MEAF6, and one of JADE1, JADE2 and JADE3. Interacts with NPHP4. As to expression, highly expressed in kidney. Also present in liver (at protein level).

Its subcellular location is the nucleus. The protein localises to the chromosome. It is found in the cytoplasm. The protein resides in the cytoskeleton. It localises to the cilium basal body. Its function is as follows. Scaffold subunit of some HBO1 complexes, which have a histone H4 acetyltransferase activity. Plays a key role in HBO1 complex by directing KAT7/HBO1 specificity towards histone H4 acetylation (H4K5ac, H4K8ac and H4K12ac), regulating DNA replication initiation, regulating DNA replication initiation. May also promote acetylation of nucleosomal histone H4 by KAT5. Promotes apoptosis. May act as a renal tumor suppressor. Negatively regulates canonical Wnt signaling; at least in part, cooperates with NPHP4 in this function. This chain is Protein Jade-1 (Jade1), found in Mus musculus (Mouse).